The chain runs to 191 residues: Calcium and integrin-binding protein 1 (191 aa).

Residue glycine 2 is the site of N-myristoyl glycine attachment. EF-hand domains are found at residues 103 to 138 (TPDIKSHYAFRIFDFDDDGTLDREDLSQLVNCLTGE) and 148 to 183 (EMKQLIDNILEESDIDRDGTINLSEFQHVISRSPDF). Ca(2+) contacts are provided by aspartate 116, aspartate 118, aspartate 120, threonine 122, aspartate 127, aspartate 161, aspartate 163, aspartate 165, threonine 167, and glutamate 172.

Monomer. Interacts with the heterodimeric integrin alpha-IIb/beta3 (ITGA2B-ITGB3). Interacts with ITGA2B (via cytoplasmic domain); the interaction is direct and calcium-dependent. Interacts with the protein kinases PLK2/SNK and PRKDC (via the region immediately upstream of the kinase domain). Interacts with PLK3; the interaction inhibits PLK3 kinase activity. Interacts with PSEN2. Interacts (via C-terminus) with F8. Interacts with NBR1 (via C-terminus). Interacts with FEZ1 (via C-terminus). Interacts with UBR5 (via C-terminus); the interaction is sensitive to DNA damage, and may target CIB1 for ubiquitin-mediated degradation. Interacts with IFI6; the interaction is direct. Interacts with BCL2. Interacts with TAS1R2 (via C-terminus); the interaction is independent of the myristoylation state of CIB1. Interacts with ITPR3; the interaction occurs in a calcium dependent manner. Interacts with PTK2/FAK1. Interacts with MAP3K5; the interaction inhibits MAP3K5 activation by phosphorylation, and its subsequent interaction with TRAF2. Interacts (via C-terminal region) with STMN2 (via the N-terminal region); the interaction is direct, occurs in a calcium-dependent manner and attenuates the STMN2-induced neurite outgrowth inhibition. Interacts with SPHK1, the interaction occurs in a calcium-dependent manner. Interacts with ITGA2B (via C-terminal cytoplasmic tail); the interaction occurs upon platelet aggregation and is stabilized/increased in a calcium and magnesium-dependent manner. Interacts with PAK1 (via N-terminal region); the interaction is direct and occurs in a calcium-dependent manner. Interacts with RAC3 (via C-terminal region); the interaction induces their association with the cytoskeleton upon alpha-IIb/beta3 integrin-mediated adhesion. Interacts with ITGA5 and ITGAV. Interacts with MYO1C. Interacts with ITGA2B (via C-terminal cytoplasmic tail region). Interacts (via C-terminal region) with PPP3R1 isoform 1 and isoform 2; the interactions increase upon cardiomyocytes hypertrophy. Interacts with CACNA1C; the interaction increases upon cardiomyocytes hypertrophy. Interacts and forms a complex with TMC6 and TMC8; the interaction stabilizes each component of the complex. As to expression, expressed strongly in Sertoli cells, weakly in pachytene spermatocytes, round spermatids and condensing spermatids (at protein level). Expressed in testis. Expressed in cardiac myocytes and endothelial cells. Expressed in heart, liver, spleen, lung, kidney, brain and inner ear. In the inner ear, expressed in the vestibule, basilar membrane and spiral ganglion cells.

The protein resides in the membrane. The protein localises to the cell membrane. Its subcellular location is the sarcolemma. It localises to the apical cell membrane. It is found in the cell projection. The protein resides in the ruffle membrane. The protein localises to the filopodium tip. Its subcellular location is the growth cone. It localises to the lamellipodium. It is found in the cytoplasm. The protein resides in the cytoskeleton. The protein localises to the microtubule organizing center. Its subcellular location is the centrosome. It localises to the perinuclear region. It is found in the nucleus. The protein resides in the neuron projection. The protein localises to the perikaryon. Its function is as follows. Calcium-binding protein that plays a role in the regulation of numerous cellular processes, such as cell differentiation, cell division, cell proliferation, cell migration, thrombosis, angiogenesis, cardiac hypertrophy and apoptosis. Involved in bone marrow megakaryocyte differentiation by negatively regulating thrombopoietin-mediated signaling pathway. Participates in the endomitotic cell cycle of megakaryocyte, a form of mitosis in which both karyokinesis and cytokinesis are interrupted. Plays a role in integrin signaling by negatively regulating alpha-IIb/beta3 activation in thrombin-stimulated megakaryocytes preventing platelet aggregation. Up-regulates PTK2/FAK1 activity, and is also needed for the recruitment of PTK2/FAK1 to focal adhesions; it thus appears to play an important role in focal adhesion formation. Positively regulates cell migration on fibronectin in a CDC42-dependent manner, the effect being negatively regulated by PAK1. Functions as a negative regulator of stress activated MAP kinase (MAPK) signaling pathways. Down-regulates inositol 1,4,5-trisphosphate receptor-dependent calcium signaling. Involved in sphingosine kinase SPHK1 translocation to the plasma membrane in a N-myristoylation-dependent manner preventing TNF-alpha-induced apoptosis. Regulates serine/threonine-protein kinase PLK3 activity for proper completion of cell division progression. Plays a role in microtubule (MT) dynamics during neuronal development; disrupts the MT depolymerization activity of STMN2 attenuating NGF-induced neurite outgrowth and the MT reorganization at the edge of lamellipodia. Promotes cardiomyocyte hypertrophy via activation of the calcineurin/NFAT signaling pathway. Stimulates calcineurin PPP3R1 activity by mediating its anchoring to the sarcolemma. In ischemia-induced (pathological or adaptive) angiogenesis, stimulates endothelial cell proliferation, migration and microvessel formation by activating the PAK1 and ERK1/ERK2 signaling pathway. Also promotes cancer cell survival and proliferation. May regulate cell cycle and differentiation of spermatogenic germ cells, and/or differentiation of supporting Sertoli cells. Forms a complex with TMC6/EVER1 and TMC8/EVER2 in lymphocytes and keratynocytes where CIB1 stabilizes TMC6 and TMC8 levels and reciprocally. The chain is Calcium and integrin-binding protein 1 (Cib1) from Mus musculus (Mouse).